The primary structure comprises 434 residues: Glutamate-1-semialdehyde 2,1-aminomutase (434 aa).

Residue Lys266 is modified to N6-(pyridoxal phosphate)lysine.

The protein belongs to the class-III pyridoxal-phosphate-dependent aminotransferase family. HemL subfamily. In terms of assembly, homodimer. Pyridoxal 5'-phosphate serves as cofactor.

It is found in the cytoplasm. The catalysed reaction is (S)-4-amino-5-oxopentanoate = 5-aminolevulinate. Its pathway is porphyrin-containing compound metabolism; protoporphyrin-IX biosynthesis; 5-aminolevulinate from L-glutamyl-tRNA(Glu): step 2/2. This chain is Glutamate-1-semialdehyde 2,1-aminomutase, found in Psychrobacter sp. (strain PRwf-1).